A 176-amino-acid polypeptide reads, in one-letter code: Nucleoside triphosphate/diphosphate phosphatase (176 aa).

The Proton donor role is filled by Arg-23. 6 residues coordinate Mg(2+): Asn-87, Asp-103, Asp-105, Asp-107, Asp-120, and Glu-123.

It belongs to the Ntdp family. Mg(2+) serves as cofactor.

The enzyme catalyses a ribonucleoside 5'-triphosphate + H2O = a ribonucleoside 5'-diphosphate + phosphate + H(+). It carries out the reaction a ribonucleoside 5'-diphosphate + H2O = a ribonucleoside 5'-phosphate + phosphate + H(+). Its function is as follows. Has nucleoside phosphatase activity towards nucleoside triphosphates and nucleoside diphosphates. The protein is Nucleoside triphosphate/diphosphate phosphatase of Lactococcus lactis subsp. cremoris (strain MG1363).